Reading from the N-terminus, the 394-residue chain is Phosphopentomutase (394 aa).

6 residues coordinate Mn(2+): Asp-15, Asp-288, His-293, Asp-329, His-330, and His-341.

This sequence belongs to the phosphopentomutase family. Mn(2+) is required as a cofactor.

It is found in the cytoplasm. It carries out the reaction 2-deoxy-alpha-D-ribose 1-phosphate = 2-deoxy-D-ribose 5-phosphate. The enzyme catalyses alpha-D-ribose 1-phosphate = D-ribose 5-phosphate. The protein operates within carbohydrate degradation; 2-deoxy-D-ribose 1-phosphate degradation; D-glyceraldehyde 3-phosphate and acetaldehyde from 2-deoxy-alpha-D-ribose 1-phosphate: step 1/2. Isomerase that catalyzes the conversion of deoxy-ribose 1-phosphate (dRib-1-P) and ribose 1-phosphate (Rib-1-P) to deoxy-ribose 5-phosphate (dRib-5-P) and ribose 5-phosphate (Rib-5-P), respectively. The polypeptide is Phosphopentomutase (Bacillus pumilus (strain SAFR-032)).